A 252-amino-acid polypeptide reads, in one-letter code: Phosphoglycolate phosphatase (252 aa).

Asp-13 (nucleophile) is an active-site residue. The Mg(2+) site is built by Asp-13, Asp-15, and Asp-192.

This sequence belongs to the HAD-like hydrolase superfamily. CbbY/CbbZ/Gph/YieH family. In terms of assembly, monomer. Mg(2+) is required as a cofactor. The cofactor is chloride.

It catalyses the reaction 2-phosphoglycolate + H2O = glycolate + phosphate. It participates in organic acid metabolism; glycolate biosynthesis; glycolate from 2-phosphoglycolate: step 1/1. Functionally, specifically catalyzes the dephosphorylation of 2-phosphoglycolate. Is involved in the dissimilation of the intracellular 2-phosphoglycolate formed during the DNA repair of 3'-phosphoglycolate ends, a major class of DNA lesions induced by oxidative stress. The sequence is that of Phosphoglycolate phosphatase from Shigella dysenteriae serotype 1 (strain Sd197).